The chain runs to 542 residues: CTP synthase (542 aa).

The tract at residues 1–265 is amidoligase domain; it reads MPRYIFITGG…DTEILRCFGI (265 aa). S13 contributes to the CTP binding site. S13 is a UTP binding site. An ATP-binding site is contributed by 14 to 19; sequence SLGKGL. Y54 contacts L-glutamine. D71 provides a ligand contact to ATP. Mg(2+) is bound by residues D71 and E139. CTP is bound by residues 146-148, 186-191, and K222; these read DIE and KTKPTQ. UTP-binding positions include 186 to 191 and K222; that span reads KTKPTQ. 238-240 is a binding site for ATP; the sequence is RDA. The region spanning 298 to 541 is the Glutamine amidotransferase type-1 domain; it reads YVGLLDAYKS…IAAALHQSRM (244 aa). An L-glutamine-binding site is contributed by G353. C380 acts as the Nucleophile; for glutamine hydrolysis in catalysis. Residues 381 to 384, E404, and R469 each bind L-glutamine; that span reads YGMQ. Residues H514 and E516 contribute to the active site.

Belongs to the CTP synthase family. As to quaternary structure, homotetramer.

The enzyme catalyses UTP + L-glutamine + ATP + H2O = CTP + L-glutamate + ADP + phosphate + 2 H(+). The catalysed reaction is L-glutamine + H2O = L-glutamate + NH4(+). It catalyses the reaction UTP + NH4(+) + ATP = CTP + ADP + phosphate + 2 H(+). Its pathway is pyrimidine metabolism; CTP biosynthesis via de novo pathway; CTP from UDP: step 2/2. With respect to regulation, allosterically activated by GTP, when glutamine is the substrate; GTP has no effect on the reaction when ammonia is the substrate. The allosteric effector GTP functions by stabilizing the protein conformation that binds the tetrahedral intermediate(s) formed during glutamine hydrolysis. Inhibited by the product CTP, via allosteric rather than competitive inhibition. Catalyzes the ATP-dependent amination of UTP to CTP with either L-glutamine or ammonia as the source of nitrogen. Regulates intracellular CTP levels through interactions with the four ribonucleotide triphosphates. The protein is CTP synthase of Maricaulis maris (strain MCS10) (Caulobacter maris).